The sequence spans 74 residues: uncharacterized protein (74 aa).

A coiled-coil region spans residues 29 to 63 (LNSKKSALQKDKELQQQAKAQESALAGEELRRRAL).

This is an uncharacterized protein from Pseudoalteromonas phage PM2 (Bacteriophage PM2).